The chain runs to 1088 residues: Adenylate-forming reductase Nps10 (1088 aa).

The segment at 1 to 22 (MSSVSIQIPLPTPPPTQAHNSQ) is disordered. Residues 38–451 (FDWHSKNSPN…KIFGRTDDQI (414 aa)) are adenylation (A) domain. AMP-binding positions include H261, 357 to 358 (NL), T362, and 443 to 446 (IFGR). Positions 586–668 (AWDSAKTLGF…SLASFVSSVA (83 aa)) constitute a Carrier domain. S621 is modified (O-(pantetheine 4'-phosphoryl)serine). A reductase (R) domain region spans residues 712–951 (LTGSTGALGS…IPVNVAAAAI (240 aa)). NADP(+)-binding positions include 716–719 (TGAL), 804–806 (NAW), Y875, and K879.

The protein belongs to the adenylate-forming reductase family.

Functionally, adenylate-forming reductase, a natural product biosynthesis enzyme that resembles non-ribosomal peptide synthetases, yet serves to modify one substrate, rather than to condense two or more building blocks. The A-domain preferentially accepts phenylpyruvic acid and benzoic acid as substrate. The natural product of the enzyme is not yet known. The polypeptide is Adenylate-forming reductase Nps10 (Heterobasidion annosum (Root rot fungus)).